The chain runs to 634 residues: Coilin (634 aa).

Disordered stretches follow at residues 87-135 (VSPA…IAEN), 149-276 (PGPS…KLSQ), and 342-361 (GAKSDDTAKQFPSNGKDSTL). Over residues 152–181 (SVQSKLLTNKGTPKAPETQTEVSNMSANIE) the composition is skewed to polar residues. Composition is skewed to basic and acidic residues over residues 223-234 (TLKEGKMSESKN) and 251-272 (KENETREEQQDKTHLESNKIPD).

It belongs to the coilin family. In terms of tissue distribution, in egg chambers expressed in the follicle cells, nurse cells and oocyte. Expressed in the larval brain, salivary glands, fat bodies and in the somatic hub cells at the tip of the testis. Expressed in the spermatogonia and spermatocytes, and in the adult ejaculatory duct (at protein level). Expressed in the adult Malpighian tubules.

It is found in the nucleus. The protein localises to the nucleoplasm. It localises to the cajal body. The protein resides in the chromosome. Its subcellular location is the centromere. It is found in the cytoplasm. The protein localises to the cytoskeleton. It localises to the spindle. Its function is as follows. Component of nuclear coiled bodies, also known as Cajal bodies or CBs, which are involved in the modification and assembly of nucleoplasmic snRNPs. Required for Cajal body formation. The chain is Coilin from Drosophila melanogaster (Fruit fly).